The following is a 563-amino-acid chain: Germacrene-A synthase (563 aa).

Mg(2+) is bound by residues aspartate 316, aspartate 320, aspartate 460, threonine 464, and glutamate 468. The short motif at 316–320 (DDTYD) is the DDXXD motif element.

The protein belongs to the terpene synthase family. Tpsa subfamily. Mg(2+) serves as cofactor. Requires Mn(2+) as cofactor. As to expression, high expression in disk florets, moderate expression in ray florets and detected in leaves and stems, but not in roots.

It carries out the reaction (2E,6E)-farnesyl diphosphate = (+)-(R)-germacrene A + diphosphate. It functions in the pathway secondary metabolite biosynthesis; terpenoid biosynthesis. In terms of biological role, sesquiterpene synthase involved in germacrene A biosynthesis. May be involved in the biosynthesis of the sesquiterpene lactone matricine, one of the major active compounds of chamomile flowers. This chain is Germacrene-A synthase, found in Matricaria chamomilla var. recutita (German chamomile).